Reading from the N-terminus, the 44-residue chain is Large ribosomal subunit protein P2 (44 aa).

Residue Met-1 is modified to N-acetylmethionine. Residues Ser-17 and Ser-19 each carry the phosphoserine modification. Lys-21 carries the N6-acetyllysine; alternate modification. Lys-21 carries the post-translational modification N6-succinyllysine; alternate.

The protein belongs to the eukaryotic ribosomal protein P1/P2 family. In terms of assembly, heterodimer with RPLP1 at the lateral ribosomal stalk of the large ribosomal subunit. Post-translationally, phosphorylated.

In terms of biological role, plays an important role in the elongation step of protein synthesis. The sequence is that of Large ribosomal subunit protein P2 (RPLP2) from Oryctolagus cuniculus (Rabbit).